A 152-amino-acid chain; its full sequence is Transcriptional regulator MraZ (152 aa).

SpoVT-AbrB domains follow at residues 5-52 and 81-124; these read ATMV…PLPE and ASEC…DEQT.

It belongs to the MraZ family. Forms oligomers.

The protein localises to the cytoplasm. Its subcellular location is the nucleoid. Functionally, negatively regulates its own expression and that of the subsequent genes in the proximal part of the division and cell wall (dcw) gene cluster. Acts by binding directly to DNA. May also regulate the expression of genes outside the dcw cluster. In Yersinia pestis bv. Antiqua (strain Antiqua), this protein is Transcriptional regulator MraZ.